We begin with the raw amino-acid sequence, 362 residues long: Adenosine kinase (362 aa).

Position 2 is an N-acetylalanine (alanine 2). Residues 8 to 16 (PKPKKLKVE) carry the Nuclear localization signal motif. Residue aspartate 35 participates in adenosine binding. Serine 49 is a Mg(2+) binding site. Position 77 is a phosphotyrosine (tyrosine 77). The Mg(2+) site is built by aspartate 147 and asparagine 148. Glutamine 306 is a binding site for adenosine. Catalysis depends on aspartate 317, which acts as the Proton acceptor.

It belongs to the carbohydrate kinase PfkB family. In terms of assembly, monomer. The cofactor is Mg(2+). Widely expressed. Highest level in placenta, liver, muscle and kidney.

The protein localises to the nucleus. Its subcellular location is the cytoplasm. The enzyme catalyses adenosine + ATP = AMP + ADP + H(+). It participates in purine metabolism; AMP biosynthesis via salvage pathway; AMP from adenosine: step 1/1. With respect to regulation, activity is inhibited by 5-iodotubercidin and 5'-amino-5'-deoxyadenosine. Catalyzes the phosphorylation of the purine nucleoside adenosine at the 5' position in an ATP-dependent manner. Serves as a potential regulator of concentrations of extracellular adenosine and intracellular adenine nucleotides. This is Adenosine kinase from Homo sapiens (Human).